The chain runs to 41 residues: uncharacterized protein (41 aa).

This is an uncharacterized protein from Treponema pallidum (strain Nichols).